The sequence spans 650 residues: DNA gyrase subunit B (650 aa).

The Toprim domain maps to 429 to 543 (NELFIVEGDS…AGYVYIAQPP (115 aa)). Residues Glu435, Asp508, and Asp510 each contribute to the Mg(2+) site.

The protein belongs to the type II topoisomerase GyrB family. Heterotetramer, composed of two GyrA and two GyrB chains. In the heterotetramer, GyrA contains the active site tyrosine that forms a transient covalent intermediate with DNA, while GyrB binds cofactors and catalyzes ATP hydrolysis. Mg(2+) serves as cofactor. Requires Mn(2+) as cofactor. Ca(2+) is required as a cofactor.

Its subcellular location is the cytoplasm. The catalysed reaction is ATP-dependent breakage, passage and rejoining of double-stranded DNA.. In terms of biological role, a type II topoisomerase that negatively supercoils closed circular double-stranded (ds) DNA in an ATP-dependent manner to modulate DNA topology and maintain chromosomes in an underwound state. Negative supercoiling favors strand separation, and DNA replication, transcription, recombination and repair, all of which involve strand separation. Also able to catalyze the interconversion of other topological isomers of dsDNA rings, including catenanes and knotted rings. Type II topoisomerases break and join 2 DNA strands simultaneously in an ATP-dependent manner. The sequence is that of DNA gyrase subunit B from Streptococcus pyogenes serotype M3 (strain ATCC BAA-595 / MGAS315).